Reading from the N-terminus, the 151-residue chain is MERPESELIRQSWRAVSRSPLEHGTVLFSRLFALEPSLLPLFQYNGRQFSSPEDCLSSPEFLDHIRKVMLVIDAAVTNVEDLSSLEEYLATLGRKHRAVGVRLSSFSTVGESLLYMLEKCLGPDFTPATRTAWSQLYGAVVQAMSRGWDGE.

Residues 1–149 form the Globin domain; that stretch reads MERPESELIR…VVQAMSRGWD (149 aa). Heme b is bound by residues His64 and His96.

It belongs to the globin family. As to quaternary structure, monomer. Homodimer and homotetramer; disulfide-linked. Mainly monomeric but also detected as part of homodimers and homotetramers. Interacts with 14-3-3 proteins; regulates the phosphorylation of NGB. Could interact (ferrous form) with G-alpha(i) proteins (GTP-bound form). Post-translationally, phosphorylated during hypoxia by ERK1/ERK2. Phosphorylation regulates the heme pocket hexacoordination preventing the association of His-64 with the heme metal center. Thereby, promotes the access of dioxygen and nitrite to the heme and stimulates the nitrite reductase activity. Phosphorylation during hypoxia is stabilized by 14-3-3 proteins. As to expression, widely distributed throughout the adult brain, including cerebral cortex, hippocampus, thalamus, hypothalamus, olfactory bulb, and cerebellum.

It localises to the cytoplasm. It is found in the cytosol. Its subcellular location is the mitochondrion matrix. It carries out the reaction Fe(III)-heme b-[protein] + nitric oxide + H2O = Fe(II)-heme b-[protein] + nitrite + 2 H(+). In terms of biological role, monomeric globin with a bis-histidyl six-coordinate heme-iron atom through which it can bind dioxygen, carbon monoxide and nitric oxide. Could help transport oxygen and increase its availability to the metabolically active neuronal tissues, though its low quantity in tissues as well as its high affinity for dioxygen, which may limit its oxygen-releasing ability, argue against it. The ferrous/deoxygenated form exhibits a nitrite reductase activity and it could produce nitric oxide which in turn inhibits cellular respiration in response to hypoxia. In its ferrous/deoxygenated state, it may also exhibit GDI (Guanine nucleotide Dissociation Inhibitor) activity toward heterotrimeric G-alpha proteins, thereby regulating signal transduction to facilitate neuroprotective responses in the wake of hypoxia and associated oxidative stress. This chain is Neuroglobin, found in Rattus norvegicus (Rat).